Here is a 406-residue protein sequence, read N- to C-terminus: Multifunctional CCA protein (406 aa).

ATP is bound by residues G8 and R11. CTP is bound by residues G8 and R11. Mg(2+) is bound by residues D21 and D23. ATP-binding residues include R91, R137, and R140. CTP contacts are provided by R91, R137, and R140. Positions 228–329 constitute an HD domain; sequence TGIHTLMVAE…IKILNKFDVW (102 aa).

Belongs to the tRNA nucleotidyltransferase/poly(A) polymerase family. Bacterial CCA-adding enzyme type 1 subfamily. Monomer. Can also form homodimers and oligomers. The cofactor is Mg(2+). It depends on Ni(2+) as a cofactor.

It catalyses the reaction a tRNA precursor + 2 CTP + ATP = a tRNA with a 3' CCA end + 3 diphosphate. The enzyme catalyses a tRNA with a 3' CCA end + 2 CTP + ATP = a tRNA with a 3' CCACCA end + 3 diphosphate. Its function is as follows. Catalyzes the addition and repair of the essential 3'-terminal CCA sequence in tRNAs without using a nucleic acid template. Adds these three nucleotides in the order of C, C, and A to the tRNA nucleotide-73, using CTP and ATP as substrates and producing inorganic pyrophosphate. tRNA 3'-terminal CCA addition is required both for tRNA processing and repair. Also involved in tRNA surveillance by mediating tandem CCA addition to generate a CCACCA at the 3' terminus of unstable tRNAs. While stable tRNAs receive only 3'-terminal CCA, unstable tRNAs are marked with CCACCA and rapidly degraded. The polypeptide is Multifunctional CCA protein (Vibrio parahaemolyticus serotype O3:K6 (strain RIMD 2210633)).